The chain runs to 262 residues: Octanoyltransferase (262 aa).

Residues 60-248 form the BPL/LPL catalytic domain; sequence GTADELVWLV…AFEMVFGPTR (189 aa). Residues 99-106, 179-181, and 192-194 each bind substrate; these read RGGEYTYH, AIG, and GLS. Cysteine 210 serves as the catalytic Acyl-thioester intermediate.

The protein belongs to the LipB family.

It localises to the cytoplasm. The catalysed reaction is octanoyl-[ACP] + L-lysyl-[protein] = N(6)-octanoyl-L-lysyl-[protein] + holo-[ACP] + H(+). It participates in protein modification; protein lipoylation via endogenous pathway; protein N(6)-(lipoyl)lysine from octanoyl-[acyl-carrier-protein]: step 1/2. Functionally, catalyzes the transfer of endogenously produced octanoic acid from octanoyl-acyl-carrier-protein onto the lipoyl domains of lipoate-dependent enzymes. Lipoyl-ACP can also act as a substrate although octanoyl-ACP is likely to be the physiological substrate. This Sinorhizobium medicae (strain WSM419) (Ensifer medicae) protein is Octanoyltransferase.